We begin with the raw amino-acid sequence, 364 residues long: MVRVDVEERFNRIARNTVEIVTEEELKGLLASGARIKGYIGYEPSGVAHIGWLVWMYKVKDLVEAGVDFSVLEATWHAYINDKLGGDMDLIRAAARIVRRVMEAAGVPVERVRFVDAEELASDKDYWGLVIRVAKRASLARVRRALTIMGRRAEEAEVDASKLIYPLMQVSDIFYMDLDIALGGMDQRKAHMLARDVAEKLGRKKPVAIHTPIISSLQGPGRMEASQGEIDDVLAEVKMSKSKPETAVFVVDSDDDIRRKIRKAYCPAKQVQGNPVLEIARYILFARDGFTLRVDRPAKYGGPVEYTSYEELERDYTDGRLHPLDLKNAVAESLIEVVRPIRGAVLGDPAMKRALEAIEGKVTR.

Position 39 (Y39) interacts with L-tyrosine. ATP-binding residues include H49 and W52. L-tyrosine is bound by residues Y165, Q169, D172, and Q187. The 'KMSKS' region signature appears at 238–242; that stretch reads KMSKS. K241 is an ATP binding site.

The protein belongs to the class-I aminoacyl-tRNA synthetase family. TyrS type 4 subfamily. In terms of assembly, homodimer.

It is found in the cytoplasm. It catalyses the reaction tRNA(Tyr) + L-tyrosine + ATP = L-tyrosyl-tRNA(Tyr) + AMP + diphosphate + H(+). Functionally, catalyzes the attachment of tyrosine to tRNA(Tyr) in a two-step reaction: tyrosine is first activated by ATP to form Tyr-AMP and then transferred to the acceptor end of tRNA(Tyr). This Aeropyrum pernix (strain ATCC 700893 / DSM 11879 / JCM 9820 / NBRC 100138 / K1) protein is Tyrosine--tRNA ligase.